A 118-amino-acid chain; its full sequence is Large ribosomal subunit protein bL19 (118 aa).

The protein belongs to the bacterial ribosomal protein bL19 family.

Functionally, this protein is located at the 30S-50S ribosomal subunit interface and may play a role in the structure and function of the aminoacyl-tRNA binding site. This chain is Large ribosomal subunit protein bL19, found in Salinispora tropica (strain ATCC BAA-916 / DSM 44818 / JCM 13857 / NBRC 105044 / CNB-440).